The following is an 86-amino-acid chain: V-type proton ATPase subunit e (86 aa).

A helical membrane pass occupies residues 1–21; that stretch reads MGILIPLVSVSAFWAIIGFGG. Residues 22 to 32 lie on the Cytoplasmic side of the membrane; that stretch reads PWIVPKGPNRG. The helical transmembrane segment at 33–53 threads the bilayer; the sequence is IIQLMIIMTAVCCWMFWIMVF. Residues 54–86 lie on the Lumenal side of the membrane; the sequence is LHQLNPLIGPQINVKTIRWISEKWGDAPNVINN.

This sequence belongs to the V-ATPase e1/e2 subunit family. As to quaternary structure, V-ATPase is a heteromultimeric enzyme made up of two complexes: the ATP-hydrolytic V1 complex and the proton translocation V0 complex. The V1 complex consists of three catalytic AB heterodimers that form a heterohexamer, three peripheral stalks each consisting of EG heterodimers, one central rotor including subunits D and F, and the regulatory subunits C and H. The proton translocation complex V0 consists of the proton transport subunit a, a ring of proteolipid subunits c9c'', rotary subunit d, subunits e and f, and the accessory subunits vah-19/Ac45 and vah-20/PRR.

It localises to the apical cell membrane. In terms of biological role, subunit of the V0 complex of vacuolar(H+)-ATPase (V-ATPase), a multisubunit enzyme composed of a peripheral complex (V1) that hydrolyzes ATP and a membrane integral complex (V0) that translocates protons. V-ATPase is responsible for acidifying and maintaining the pH of intracellular compartments and in some cell types, is targeted to the plasma membrane, where it is responsible for acidifying the extracellular environment. During embryonic development, the V-ATPase is required to repress fusion of epidermal cells probably by negatively regulating eff-1-mediated cell fusion. This Caenorhabditis elegans protein is V-type proton ATPase subunit e.